A 421-amino-acid chain; its full sequence is D-amino acid dehydrogenase (421 aa).

An FAD-binding site is contributed by 3-17 (ILILGSGVVGTASAY).

The protein belongs to the DadA oxidoreductase family. Requires FAD as cofactor.

It carries out the reaction a D-alpha-amino acid + A + H2O = a 2-oxocarboxylate + AH2 + NH4(+). The protein operates within amino-acid degradation; D-alanine degradation; NH(3) and pyruvate from D-alanine: step 1/1. Oxidative deamination of D-amino acids. This Xanthobacter autotrophicus (strain ATCC BAA-1158 / Py2) protein is D-amino acid dehydrogenase.